Consider the following 435-residue polypeptide: Legumain (435 aa).

The first 17 residues, 1–17, serve as a signal peptide directing secretion; the sequence is MTWRVAVLLSLVLGAGA. Asn93 carries N-linked (GlcNAc...) asparagine glycosylation. His150 is a catalytic residue. N-linked (GlcNAc...) asparagine glycosylation is present at Asn169. Cys191 serves as the catalytic Nucleophile. N-linked (GlcNAc...) asparagine glycans are attached at residues Asn265 and Asn274. A propeptide spanning residues 326–435 is cleaved from the precursor; the sequence is DVKESQNLIG…AMDKVCLSHY (110 aa). 2 disulfide bridges follow: Cys380–Cys414 and Cys392–Cys431.

Belongs to the peptidase C13 family. Homodimer before autocatalytic removal of the propeptide. Monomer after autocatalytic processing. May interact with integrins. In terms of processing, glycosylated. Activated by autocatalytic processing at pH 4. As to expression, detected in kidney proximal tubules (at protein level). Ubiquitous. Particularly abundant in kidney and placenta.

It localises to the lysosome. The enzyme catalyses Hydrolysis of proteins and small molecule substrates at -Asn-|-Xaa- bonds.. With respect to regulation, inhibited by cystatin-C. In terms of biological role, has a strict specificity for hydrolysis of asparaginyl bonds. Can also cleave aspartyl bonds slowly, especially under acidic conditions. Involved in the processing of proteins for MHC class II antigen presentation in the lysosomal/endosomal system. Also involved in MHC class I antigen presentation in cross-presenting dendritic cells by mediating cleavage and maturation of Perforin-2 (MPEG1), thereby promoting antigen translocation in the cytosol. Required for normal lysosomal protein degradation in renal proximal tubules. Required for normal degradation of internalized EGFR. Plays a role in the regulation of cell proliferation via its role in EGFR degradation. In Mus musculus (Mouse), this protein is Legumain (Lgmn).